The primary structure comprises 436 residues: Xylose isomerase (436 aa).

The Mg(2+) site is built by Asp-306 and Asp-308.

It belongs to the xylose isomerase family. In terms of assembly, homotetramer. Requires Mg(2+) as cofactor.

It is found in the cytoplasm. It carries out the reaction alpha-D-xylose = alpha-D-xylulofuranose. The protein is Xylose isomerase of Sinorhizobium fredii (strain NBRC 101917 / NGR234).